We begin with the raw amino-acid sequence, 515 residues long: 1-pyrroline-5-carboxylate dehydrogenase (515 aa).

Catalysis depends on residues glutamate 286 and cysteine 320.

The protein belongs to the aldehyde dehydrogenase family. RocA subfamily.

The enzyme catalyses L-glutamate 5-semialdehyde + NAD(+) + H2O = L-glutamate + NADH + 2 H(+). It participates in amino-acid degradation; L-proline degradation into L-glutamate; L-glutamate from L-proline: step 2/2. The protein is 1-pyrroline-5-carboxylate dehydrogenase of Oceanobacillus iheyensis (strain DSM 14371 / CIP 107618 / JCM 11309 / KCTC 3954 / HTE831).